A 153-amino-acid chain; its full sequence is MIIQISNRQEDFQIDDELTSDIEKSIRICLLQELNDDNYEISLSFVSESEIRKLNSDYRDKDSVTDVLSFPLDDDFAIQTNLLGDIIICCKRAIEQAKEYNHSIKREIVYLVVHSMFHLLGYDHIDESDRIIMRNKEKSALKEIGIYKDEEFK.

Histidine 114, histidine 118, and histidine 124 together coordinate Zn(2+).

The protein belongs to the endoribonuclease YbeY family. Requires Zn(2+) as cofactor.

Its subcellular location is the cytoplasm. Functionally, single strand-specific metallo-endoribonuclease involved in late-stage 70S ribosome quality control and in maturation of the 3' terminus of the 16S rRNA. The polypeptide is Endoribonuclease YbeY (Finegoldia magna (strain ATCC 29328 / DSM 20472 / WAL 2508) (Peptostreptococcus magnus)).